The sequence spans 483 residues: Altronate oxidoreductase (483 aa).

NAD(+) is bound at residue isoleucine 18 to alanine 29.

It belongs to the mannitol dehydrogenase family. UxaB subfamily.

It carries out the reaction D-altronate + NAD(+) = keto-D-tagaturonate + NADH + H(+). It participates in carbohydrate metabolism; pentose and glucuronate interconversion. In Shigella flexneri serotype 5b (strain 8401), this protein is Altronate oxidoreductase.